We begin with the raw amino-acid sequence, 1206 residues long: DNA-directed RNA polymerase subunit beta' (1206 aa).

Residues Cys-60, Cys-62, Cys-75, and Cys-78 each coordinate Zn(2+). Residues Asp-449, Asp-451, and Asp-453 each contribute to the Mg(2+) site. Residues Cys-818, Cys-892, Cys-899, and Cys-902 each contribute to the Zn(2+) site.

It belongs to the RNA polymerase beta' chain family. As to quaternary structure, the RNAP catalytic core consists of 2 alpha, 1 beta, 1 beta' and 1 omega subunit. When a sigma factor is associated with the core the holoenzyme is formed, which can initiate transcription. Mg(2+) serves as cofactor. The cofactor is Zn(2+).

The catalysed reaction is RNA(n) + a ribonucleoside 5'-triphosphate = RNA(n+1) + diphosphate. In terms of biological role, DNA-dependent RNA polymerase catalyzes the transcription of DNA into RNA using the four ribonucleoside triphosphates as substrates. This chain is DNA-directed RNA polymerase subunit beta', found in Shouchella clausii (strain KSM-K16) (Alkalihalobacillus clausii).